The chain runs to 212 residues: Large ribosomal subunit protein uL3 (212 aa).

Position 153 is an N5-methylglutamine (glutamine 153).

Belongs to the universal ribosomal protein uL3 family. In terms of assembly, part of the 50S ribosomal subunit. Forms a cluster with proteins L14 and L19. In terms of processing, methylated by PrmB.

In terms of biological role, one of the primary rRNA binding proteins, it binds directly near the 3'-end of the 23S rRNA, where it nucleates assembly of the 50S subunit. This Shewanella denitrificans (strain OS217 / ATCC BAA-1090 / DSM 15013) protein is Large ribosomal subunit protein uL3.